A 64-amino-acid chain; its full sequence is Alpha-conotoxin GI (64 aa).

An N-terminal signal peptide occupies residues 1–21 (MGMRMMFTVFLLVVLATTVVS). Residues 22 to 49 (FPSERASDGRDDTAKDEGSDMDKLVEKK) constitute a propeptide that is removed on maturation. Intrachain disulfides connect C51-C56 and C52-C62. The residue at position 62 (C62) is a Cysteine amide.

This sequence belongs to the conotoxin A superfamily. Not hydroxylated; hydroxylation, on a synthetic hydroxylated GI, improves its folding but impairs its activity against target receptors. Expressed by the venom duct.

Its subcellular location is the secreted. Alpha-conotoxins act on postsynaptic membranes, they bind to the nicotinic acetylcholine receptors (nAChR) and thus inhibit them. Reversibly inhibits mammalian muscle nAChR (IC(50)=339 nM on adult subtype (alpha-1-beta-1-gamma-delta/CHRNA1-CHRNB1-CHRNG-CHRND) and IC(50)=5.86-995 nM on fetal subtype (alpha-1-beta-1-delta-epsilon/CHRNA1-CHRNB1-CHRND-CHRNE)). The higher affinity site is the alpha/delta site on mouse muscle-derived BC3H-1 receptor, and the other site (alpha/gamma site) on nicotinic receptors from Torpedo californica electric organ. This is Alpha-conotoxin GI from Conus geographus (Geography cone).